Reading from the N-terminus, the 190-residue chain is Superoxide dismutase [Fe] (190 aa).

Fe cation is bound by residues histidine 27, histidine 75, aspartate 156, and histidine 160.

Belongs to the iron/manganese superoxide dismutase family. Homodimer. Requires Fe cation as cofactor.

The catalysed reaction is 2 superoxide + 2 H(+) = H2O2 + O2. Its function is as follows. Destroys superoxide anion radicals which are normally produced within the cells and which are toxic to biological systems. This Entamoeba histolytica (strain ATCC 30459 / HM-1:IMSS / ABRM) protein is Superoxide dismutase [Fe] (SODB).